We begin with the raw amino-acid sequence, 157 residues long: Putative low molecular weight protein-tyrosine-phosphatase slr0328 (157 aa).

Cys-7 functions as the Nucleophile in the catalytic mechanism. Arg-13 is a catalytic residue. Asp-124 serves as the catalytic Proton donor.

The protein belongs to the low molecular weight phosphotyrosine protein phosphatase family.

The catalysed reaction is O-phospho-L-tyrosyl-[protein] + H2O = L-tyrosyl-[protein] + phosphate. In Synechocystis sp. (strain ATCC 27184 / PCC 6803 / Kazusa), this protein is Putative low molecular weight protein-tyrosine-phosphatase slr0328.